A 207-amino-acid polypeptide reads, in one-letter code: Ras-related protein Rab-7a (207 aa).

T2 is modified (N-acetylthreonine). S17, G18, V19, G20, K21, T22, S23, S34, N35, Y37, and T40 together coordinate GTP. T22 provides a ligand contact to Mg(2+). A Switch 1 motif is present at residues 28-41 (YVNKKFSNQYKATI). Mg(2+) contacts are provided by T40 and D63. G66 contributes to the GTP binding site. The Switch 2 signature appears at 67-82 (QERFQSLSVAFYRGAD). S72 is modified (phosphoserine). 5 residues coordinate GTP: N125, K126, D128, A156, and K157. Glycyl lysine isopeptide (Lys-Gly) (interchain with G-Cter in ubiquitin) cross-links involve residues K191 and K194. 2 S-geranylgeranyl cysteine lipidation sites follow: C205 and C207. The residue at position 207 (C207) is a Cysteine methyl ester.

The protein belongs to the small GTPase superfamily. Rab family. In terms of assembly, interacts with NTRK1/TRKA. Interacts with RILP. Interacts with PSMA7. Interacts with RNF115. Interacts with FYCO1. Interacts with the PIK3C3/VPS34-PIK3R4 complex. The GTP-bound form interacts with OSBPL1A. The GTP-bound form interacts with RAC1. Interacts with CLN3. Interacts with CHM, the substrate-binding subunit of the Rab geranylgeranyltransferase complex. Interacts with C9orf72. Does not interact with HPS4 and the BLOC-3 complex (heterodimer of HPS1 and HPS4). Interacts with CLN5. Interacts with PLEKHM1 (via N- and C-terminus). Interacts with PRPH; the interaction is direct. Interacts with VPS13A. The GDP-bound form interacts with RIMOC1. Interacts with the MON1A-CCZ1B complex and this interaction is enhanced in the presence of RIMOC1. Interacts with VPS39 and VPS41. Forms a ternary complex with LAMP2 and RUFY4; the interaction with LAMP2 is mediated by RUFY4 (via RUN and coiled coil domains). Requires Mg(2+) as cofactor. Post-translationally, deubiquitination at Lys-191 and Lys-194 by USP32. In terms of processing, phosphorylated at Ser-72 by LRRK1; phosphorylation is dependent on protein kinase C (PKC) activation of LRRK1. Prenylated. Prenylation is required for association with cellular membranes.

The protein localises to the cytoplasmic vesicle. The protein resides in the phagosome membrane. It is found in the late endosome membrane. It localises to the lysosome membrane. Its subcellular location is the melanosome membrane. The protein localises to the autophagosome membrane. The protein resides in the lipid droplet. It is found in the endosome membrane. It localises to the mitochondrion membrane. It carries out the reaction GTP + H2O = GDP + phosphate + H(+). With respect to regulation, regulated by guanine nucleotide exchange factors (GEFs) which promote the exchange of bound GDP for free GTP. Regulated by GTPase activating proteins (GAPs) which increase the GTP hydrolysis activity. Inhibited by GDP dissociation inhibitors (GDIs). Its function is as follows. The small GTPases Rab are key regulators of intracellular membrane trafficking, from the formation of transport vesicles to their fusion with membranes. Rabs cycle between an inactive GDP-bound form and an active GTP-bound form that is able to recruit to membranes different sets of downstream effectors directly responsible for vesicle formation, movement, tethering and fusion. In its active state, RAB7A binds to a variety of effector proteins playing a key role in the regulation of endo-lysosomal trafficking. Governs early-to-late endosomal maturation, microtubule minus-end as well as plus-end directed endosomal migration and positioning, and endosome-lysosome transport through different protein-protein interaction cascades. Also plays a central role in growth-factor-mediated cell signaling, nutrient-transporter-mediated nutrient uptake, neurotrophin transport in the axons of neurons and lipid metabolism. Also involved in regulation of some specialized endosomal membrane trafficking, such as maturation of melanosomes, pathogen-induced phagosomes (or vacuoles) and autophagosomes. Plays a role in the maturation and acidification of phagosomes that engulf pathogens, such as S.aureus and Mycobacteria. Plays a role in the fusion of phagosomes with lysosomes. In concert with RAC1, plays a role in regulating the formation of RBs (ruffled borders) in osteoclasts. Controls the endosomal trafficking and neurite outgrowth signaling of NTRK1/TRKA. Regulates the endocytic trafficking of the EGF-EGFR complex by regulating its lysosomal degradation. Involved in the ADRB2-stimulated lipolysis through lipophagy, a cytosolic lipase-independent autophagic pathway. Required for the exosomal release of SDCBP, CD63 and syndecan. Required for vesicular trafficking and cell surface expression of ACE2. May play a role in PRPH neuronal intermediate filament assembly. The protein is Ras-related protein Rab-7a (RAB7A) of Oryctolagus cuniculus (Rabbit).